Reading from the N-terminus, the 143-residue chain is Nucleoside diphosphate kinase (143 aa).

The ATP site is built by K11, F59, R87, T93, R104, and N114. H117 acts as the Pros-phosphohistidine intermediate in catalysis.

Belongs to the NDK family. Homotetramer. Mg(2+) serves as cofactor.

The protein resides in the cytoplasm. The enzyme catalyses a 2'-deoxyribonucleoside 5'-diphosphate + ATP = a 2'-deoxyribonucleoside 5'-triphosphate + ADP. It carries out the reaction a ribonucleoside 5'-diphosphate + ATP = a ribonucleoside 5'-triphosphate + ADP. Its function is as follows. Major role in the synthesis of nucleoside triphosphates other than ATP. The ATP gamma phosphate is transferred to the NDP beta phosphate via a ping-pong mechanism, using a phosphorylated active-site intermediate. The chain is Nucleoside diphosphate kinase from Escherichia coli O7:K1 (strain IAI39 / ExPEC).